A 207-amino-acid chain; its full sequence is Thymidylate kinase (207 aa).

A disordered region spans residues 11–49 (EGIDGSGKSTQARRLAEHLRDTGRDPLLTREPGGSPGAE). 12–19 (GIDGSGKS) is a binding site for ATP. Positions 24–38 (RLAEHLRDTGRDPLL) are enriched in basic and acidic residues.

Belongs to the thymidylate kinase family.

It catalyses the reaction dTMP + ATP = dTDP + ADP. Phosphorylation of dTMP to form dTDP in both de novo and salvage pathways of dTTP synthesis. This chain is Thymidylate kinase, found in Dinoroseobacter shibae (strain DSM 16493 / NCIMB 14021 / DFL 12).